We begin with the raw amino-acid sequence, 406 residues long: F-box/WD repeat-containing protein mec-15 (406 aa).

An F-box domain is found at 6–53 (PTELISLPSELLCHLFTYLPQRQLITEIPLVCRRFNTILNDDKFWSRR). 5 WD repeats span residues 101 to 142 (GHSA…NGED), 156 to 195 (AHSG…ALQN), 242 to 279 (LHKR…KPVL), 281 to 320 (EYSP…VLQT), and 365 to 406 (SHEL…DQEN).

As to quaternary structure, may interact with the SCF ubiquitin ligase complex component skr-1. Expressed in several neurons in the head, tail and ventral cord, but absent in touch receptor neurons in adults. Expressed in GABAergic and cholinergic motor neurons.

The protein localises to the perikaryon. Plays a role in mechanosensory transduction (touch sensitivity), touch receptor neuron development and synapse formation. Regulates expression of the protein snb-1 and the distribution of synaptic vesicles at synapses to promote synaptic transmission at the neuromuscular junctions of GABAergic motor neurons. The sequence is that of F-box/WD repeat-containing protein mec-15 from Caenorhabditis elegans.